A 396-amino-acid polypeptide reads, in one-letter code: Putative pyridoxal phosphate-dependent acyltransferase (396 aa).

111-112 (GF) serves as a coordination point for pyridoxal 5'-phosphate. Substrate is bound at residue His136. Pyridoxal 5'-phosphate-binding positions include Ser186, 211–214 (DDAH), and 241–244 (TLSK). An N6-(pyridoxal phosphate)lysine modification is found at Lys244. Thr358 lines the substrate pocket.

The protein belongs to the class-II pyridoxal-phosphate-dependent aminotransferase family. In terms of assembly, homodimer. The cofactor is pyridoxal 5'-phosphate.

In Bacillus cereus (strain ATCC 14579 / DSM 31 / CCUG 7414 / JCM 2152 / NBRC 15305 / NCIMB 9373 / NCTC 2599 / NRRL B-3711), this protein is Putative pyridoxal phosphate-dependent acyltransferase.